The chain runs to 157 residues: Protein AE7 (157 aa).

It belongs to the MIP18 family. In terms of assembly, part of a complex formed of AE7, CIA1, MMS19 and NAR1. Interacts with CIA1 and MMS19, but not with NAR1. Expressed in the embryo, shoot apical meristem, leaf primordia, inflorescence and all floral organs.

Its subcellular location is the nucleus. It localises to the cytoplasm. Functionally, central member of the cytosolic iron-sulfur (Fe-S) protein assembly (CIA) pathway. Involved in leaf polarity formation. Promotes leaf adaxial identity. May play a role in the cell cycle progression and is required for cell proliferation. This chain is Protein AE7, found in Arabidopsis thaliana (Mouse-ear cress).